A 365-amino-acid chain; its full sequence is uncharacterized protein (365 aa).

This is an uncharacterized protein from Archaeoglobus fulgidus (strain ATCC 49558 / DSM 4304 / JCM 9628 / NBRC 100126 / VC-16).